The primary structure comprises 267 residues: Imidazole glycerol phosphate synthase subunit HisF (267 aa).

Catalysis depends on residues Asp21 and Asp140.

The protein belongs to the HisA/HisF family. Heterodimer of HisH and HisF.

The protein localises to the cytoplasm. The catalysed reaction is 5-[(5-phospho-1-deoxy-D-ribulos-1-ylimino)methylamino]-1-(5-phospho-beta-D-ribosyl)imidazole-4-carboxamide + L-glutamine = D-erythro-1-(imidazol-4-yl)glycerol 3-phosphate + 5-amino-1-(5-phospho-beta-D-ribosyl)imidazole-4-carboxamide + L-glutamate + H(+). It functions in the pathway amino-acid biosynthesis; L-histidine biosynthesis; L-histidine from 5-phospho-alpha-D-ribose 1-diphosphate: step 5/9. IGPS catalyzes the conversion of PRFAR and glutamine to IGP, AICAR and glutamate. The HisF subunit catalyzes the cyclization activity that produces IGP and AICAR from PRFAR using the ammonia provided by the HisH subunit. The polypeptide is Imidazole glycerol phosphate synthase subunit HisF (Bordetella avium (strain 197N)).